Consider the following 275-residue polypeptide: 4-hydroxy-3-methylbut-2-enyl diphosphate reductase (275 aa).

Cys-12 contributes to the [4Fe-4S] cluster binding site. His-36 and His-70 together coordinate (2E)-4-hydroxy-3-methylbut-2-enyl diphosphate. Residues His-36 and His-70 each contribute to the dimethylallyl diphosphate site. Isopentenyl diphosphate is bound by residues His-36 and His-70. Position 92 (Cys-92) interacts with [4Fe-4S] cluster. His-120 provides a ligand contact to (2E)-4-hydroxy-3-methylbut-2-enyl diphosphate. His-120 contacts dimethylallyl diphosphate. His-120 provides a ligand contact to isopentenyl diphosphate. Glu-122 (proton donor) is an active-site residue. Thr-158 is a binding site for (2E)-4-hydroxy-3-methylbut-2-enyl diphosphate. Cys-186 lines the [4Fe-4S] cluster pocket. Positions 214, 215, 216, and 258 each coordinate (2E)-4-hydroxy-3-methylbut-2-enyl diphosphate. The dimethylallyl diphosphate site is built by Ser-214, Ser-215, Asn-216, and Ser-258. Isopentenyl diphosphate-binding residues include Ser-214, Ser-215, Asn-216, and Ser-258.

Belongs to the IspH family. It depends on [4Fe-4S] cluster as a cofactor.

It carries out the reaction isopentenyl diphosphate + 2 oxidized [2Fe-2S]-[ferredoxin] + H2O = (2E)-4-hydroxy-3-methylbut-2-enyl diphosphate + 2 reduced [2Fe-2S]-[ferredoxin] + 2 H(+). It catalyses the reaction dimethylallyl diphosphate + 2 oxidized [2Fe-2S]-[ferredoxin] + H2O = (2E)-4-hydroxy-3-methylbut-2-enyl diphosphate + 2 reduced [2Fe-2S]-[ferredoxin] + 2 H(+). It participates in isoprenoid biosynthesis; dimethylallyl diphosphate biosynthesis; dimethylallyl diphosphate from (2E)-4-hydroxy-3-methylbutenyl diphosphate: step 1/1. It functions in the pathway isoprenoid biosynthesis; isopentenyl diphosphate biosynthesis via DXP pathway; isopentenyl diphosphate from 1-deoxy-D-xylulose 5-phosphate: step 6/6. In terms of biological role, catalyzes the conversion of 1-hydroxy-2-methyl-2-(E)-butenyl 4-diphosphate (HMBPP) into a mixture of isopentenyl diphosphate (IPP) and dimethylallyl diphosphate (DMAPP). Acts in the terminal step of the DOXP/MEP pathway for isoprenoid precursor biosynthesis. This is 4-hydroxy-3-methylbut-2-enyl diphosphate reductase from Campylobacter hominis (strain ATCC BAA-381 / DSM 21671 / CCUG 45161 / LMG 19568 / NCTC 13146 / CH001A).